We begin with the raw amino-acid sequence, 336 residues long: tRNA-modifying protein YgfZ (336 aa).

W28 and W191 together coordinate folate.

The protein belongs to the tRNA-modifying YgfZ family.

The protein resides in the cytoplasm. Its function is as follows. Folate-binding protein involved in regulating the level of ATP-DnaA and in the modification of some tRNAs. It is probably a key factor in regulatory networks that act via tRNA modification, such as initiation of chromosomal replication. This is tRNA-modifying protein YgfZ from Hamiltonella defensa subsp. Acyrthosiphon pisum (strain 5AT).